A 160-amino-acid chain; its full sequence is D-aminoacyl-tRNA deacylase 2 (160 aa).

The short motif at 152-153 (GP) is the Gly-transPro motif, allows the protein to recognize chirality of D-amino acids element.

Belongs to the DTD family. As to quaternary structure, homodimer.

It localises to the cytoplasm. It catalyses the reaction a D-aminoacyl-tRNA + H2O = a tRNA + a D-alpha-amino acid + H(+). The enzyme catalyses glycyl-tRNA(Ala) + H2O = tRNA(Ala) + glycine + H(+). The catalysed reaction is D-tyrosyl-tRNA(Tyr) + H2O = D-tyrosine + tRNA(Tyr). It carries out the reaction L-alanyl-tRNA(Thr) + H2O = tRNA(Thr) + L-alanine + H(+). Its function is as follows. Deacylates mischarged D-aminoacyl-tRNAs. Also deacylates mischarged glycyl-tRNA(Ala), protecting cells against glycine mischarging by AlaRS. Probably acts by rejecting L-amino acids from its binding site rather than specific recognition of D-amino acids. Catalyzes the hydrolysis of D-tyrosyl-tRNA(Tyr), has no activity on correctly charged L-tyrosyl-tRNA(Tyr). By recycling D-aminoacyl-tRNA to D-amino acids and free tRNA molecules, this enzyme counteracts the toxicity associated with the formation of D-aminoacyl-tRNA entities in vivo and helps enforce protein L-homochirality. In contrast to DTD1, deacylates L-Ala mischarged on tRNA(Thr)(G4.U69) by alanine-tRNA ligase AARS. Can deacylate L-Ala due to a relaxed specificity for substrate chirality caused by the trans conformation of the Gly-Pro motif in the active site. Also hydrolyzes correctly charged, achiral, glycyl-tRNA(Gly) in vitro, although in vivo eef1a1a/EF-Tu may protect cognate achiral glycyl-tRNA(Gly) from DTD2-mediated deacetylation. The polypeptide is D-aminoacyl-tRNA deacylase 2 (dtd2) (Danio rerio (Zebrafish)).